Consider the following 149-residue polypeptide: Large ribosomal subunit protein uL13 (149 aa).

The protein belongs to the universal ribosomal protein uL13 family. As to quaternary structure, part of the 50S ribosomal subunit.

Its function is as follows. This protein is one of the early assembly proteins of the 50S ribosomal subunit, although it is not seen to bind rRNA by itself. It is important during the early stages of 50S assembly. This Thermotoga maritima (strain ATCC 43589 / DSM 3109 / JCM 10099 / NBRC 100826 / MSB8) protein is Large ribosomal subunit protein uL13.